The following is an 825-amino-acid chain: MNSTEISEDVEEVLKNNPVKAEGSDATLDCSRNSRASEKHLLESVLTALHDSSKRKQLDSDGQPDSVPSVKRRRLIPEALLAGMRTRENSSPCQGNGEPASRGRSGSCAWPAEEEPSTEATVPSYKKPLYGISHKIMEKKNPPSGDLLSPYELFEKANSSSGPSPLRLLSESQKRECGVGVATDGDLNIYFLIQKMFYMLNGLTTNMSQLHSKMDLLSLEVSRVKKQVSPSELVAKFQPPPEYQLTASELKQIAEQSLSCGDLACRLLLQLFPELFSDVDFSRGCSACGFAAKRKLESLHLQLIRNYVEVYYPNVKDTAVWQAECLPQLNDFFSRFWAQREMEDSQPGGQVTNFFEADQVDAGHFLDNKDQEEALSLDRSSTIASDHVVDTQDLTEFLDEASSPGEFAVFLLHRLFPELFDHRKLGEQYSCYGDGGKQELDPQRLQIIRNYTEIYFPDMQEEEAWLQQCAQRINDELEGLGLEGGSEGEAPRDDCYDSSSLPDDISVVKVEDNFEGERPGRRSKKIWLVPIDFDKLEIPQPDFEMPGSDCLLSKEQLRSIYESSLSIGNFASRLLVHLFPELFTHENLRKQYNCSGSLGKKQLDPARIRLIRHYVQLLYPRAKNDRVWTLEFVGKLDERCRRRDTEQRRSYQQQRKVHVPGPECRDLASYAINPERFREEFEGPPLPPERSSKDFCKIPLDELVVPSPDFPVPSPYLLSDKEVREIVQQSLSVGNFAARLLVRLFPELFTTENLRLQYNHSGACNKKQLDPTRLRLIRHYVEAVYPVEKMEEVWHYECIPSIDERCRRPNRKKCDILKKAKKVEK.

Acidic residues predominate over residues 1 to 11 (MNSTEISEDVE). The tract at residues 1–35 (MNSTEISEDVEEVLKNNPVKAEGSDATLDCSRNSR) is disordered. Lys-20 participates in a covalent cross-link: Glycyl lysine isopeptide (Lys-Gly) (interchain with G-Cter in SUMO); alternate. Lys-20 is covalently cross-linked (Glycyl lysine isopeptide (Lys-Gly) (interchain with G-Cter in SUMO1); alternate). Lys-20 is covalently cross-linked (Glycyl lysine isopeptide (Lys-Gly) (interchain with G-Cter in SUMO2); alternate). Glycyl lysine isopeptide (Lys-Gly) (interchain with G-Cter in SUMO2) cross-links involve residues Lys-39, Lys-54, Lys-56, Lys-71, Lys-126, Lys-127, Lys-135, Lys-140, Lys-156, and Lys-174. The disordered stretch occupies residues 52-122 (SSKRKQLDSD…EEEPSTEATV (71 aa)). Positions 54–56 (KRK) match the Nuclear localization signal motif. Positions 239–340 (PPPEYQLTAS…DFFSRFWAQR (102 aa)) constitute a BEN 1 domain. At Ser-376 the chain carries Phosphoserine. One can recognise a BEN 2 domain in the interval 384-484 (ASDHVVDTQD…DELEGLGLEG (101 aa)). Lys-424 participates in a covalent cross-link: Glycyl lysine isopeptide (Lys-Gly) (interchain with G-Cter in SUMO2). Ser-486 is modified (phosphoserine). A Glycyl lysine isopeptide (Lys-Gly) (interchain with G-Cter in SUMO); alternate cross-link involves residue Lys-509. Residue Lys-509 forms a Glycyl lysine isopeptide (Lys-Gly) (interchain with G-Cter in SUMO2); alternate linkage. A Glycyl lysine isopeptide (Lys-Gly) (interchain with G-Cter in SUMO2) cross-link involves residue Lys-525. Residues 547 to 647 (GSDCLLSKEQ…ERCRRRDTEQ (101 aa)) enclose the BEN 3 domain. Lys-697 participates in a covalent cross-link: Glycyl lysine isopeptide (Lys-Gly) (interchain with G-Cter in SUMO2). The BEN 4 domain maps to 712–813 (VPSPYLLSDK…ERCRRPNRKK (102 aa)).

Homooligomer, probably a homooctamer. Interacts with HDAC2 and HDAC3, but not HDAC1. Interacts with SALL4. Interacts with SMARCA5/SNF2H, BAZ2A/TIP5 and USP21. Interacts with the nucleosome remodeling and histone deacetylase (NuRD) repressor complex. Interacts (via BEN domains 1 and 3) with ERCC6L (via N-terminal TPR repeat); the interaction is direct. In terms of processing, sumoylated at Lys-20 by SUMO1 and at Lys-509 by SUMO1, SUMO2 and SUMO3. Sumoylation probably occurs sequentially, with that of Lys-20 preceding that of Lys-509. It does not alter association with heterochromatin, but is required for the repression of transcription.

Its subcellular location is the nucleus. It is found in the nucleolus. Its function is as follows. Transcriptional repressor which associates with the NoRC (nucleolar remodeling complex) complex and plays a key role in repressing rDNA transcription. The sumoylated form modulates the stability of the NoRC complex component BAZ2A/TIP5 by controlling its USP21-mediated deubiquitination. Binds to unmethylated major satellite DNA and is involved in the recruitment of the Polycomb repressive complex 2 (PRC2) to major satellites. Stimulates the ERCC6L translocase and ATPase activities. This chain is BEN domain-containing protein 3 (Bend3), found in Mus musculus (Mouse).